Consider the following 267-residue polypeptide: Glutamate 5-kinase (267 aa).

Residue K14 participates in ATP binding. Substrate-binding residues include S54, D141, and N157. ATP-binding positions include 177–178 and 219–225; these read SD and TGGMLSK.

It belongs to the glutamate 5-kinase family.

It is found in the cytoplasm. It carries out the reaction L-glutamate + ATP = L-glutamyl 5-phosphate + ADP. The protein operates within amino-acid biosynthesis; L-proline biosynthesis; L-glutamate 5-semialdehyde from L-glutamate: step 1/2. Functionally, catalyzes the transfer of a phosphate group to glutamate to form L-glutamate 5-phosphate. In Streptococcus agalactiae serotype Ia (strain ATCC 27591 / A909 / CDC SS700), this protein is Glutamate 5-kinase.